We begin with the raw amino-acid sequence, 776 residues long: Zinc finger CCCH-type antiviral protein 1 (776 aa).

Alanine 2 bears the N-acetylalanine mark. Residues 2–254 are N-terminal domain; the sequence is ADPGVCCFIT…DRSKSRDRFL (253 aa). The Nuclear localization signal signature appears at 69 to 76; the sequence is RARVCRRK. 4 C3H1-type zinc fingers span residues 73-86, 88-110, 150-172, and 169-193; these read CRRK…DSLH, CKLN…KYSH, CKSY…ERLH, and ERLH…SHNL. The disordered stretch occupies residues 221–249; it reads NKHARRNPPGTRAAHPHRRGGAHRDRSKS. The tract at residues 224–254 is binding to EXOSC5; it reads ARRNPPGTRAAHPHRRGGAHRDRSKSRDRFL. Residues serine 257, serine 262, serine 266, and serine 270 each carry the phosphoserine; by GSK3-beta modification. Serine 274 is modified (phosphoserine). Phosphothreonine is present on threonine 278. Serine 283 is subject to Phosphoserine. The Nuclear export signal signature appears at 284–291; it reads LEDVSVDV. The segment at 308-355 is disordered; it reads PVSSKAAGVQGPSQMRASQEFSEDGNLDDIFSRNRSDSSSSRASAAKV. The span at 318-327 shows a compositional bias: polar residues; that stretch reads GPSQMRASQE. Residues serine 325, serine 351, and serine 398 each carry the phosphoserine modification. Low complexity predominate over residues 344–353; it reads DSSSSRASAA. A Nuclear localization signal motif is present at residues 405-406; sequence KK. Residues 457–483 form a disordered region; the sequence is WASASTHNAPNGSSQIMDETPNVSKSS. The span at 459–483 shows a compositional bias: polar residues; it reads SASTHNAPNGSSQIMDETPNVSKSS. Position 501 is a phosphotyrosine (tyrosine 501). The tract at residues 512–562 is disordered; sequence LAVPGEATTPVQSNRLPQSPLSSSSHRAAASGSPGKNSTHTSVSPAIESSR. Residues 523-546 show a composition bias toward low complexity; the sequence is QSNRLPQSPLSSSSHRAAASGSPG. Phosphoserine is present on residues serine 544 and serine 667. A WWE domain is found at 671–758; that stretch reads YEEKPLSAVF…ASKTQRHVVR (88 aa).

Belongs to the ARTD/PARP family. As to quaternary structure, homodimer or homooligomer. Homooligomerization is essential for its antiviral activity. Interacts with EXOSC5. Interacts with EXOSC3, EXOSC7, DCP2 and DCP1A. Interacts with PARN in an RNA-independent manner. Interacts with XRN1 in an RNA-dependent manner. Interacts (via N-terminal domain) with DHX30 (via N-terminus) in an RNA-independent manner. Interacts (via N-terminal domain) with DDX17 in an RNA-independent manner. Post-translationally, phosphorylation at Ser-274 is essential for sequential phosphorylation of Ser-270, Ser-266, Ser-262 and Ser-257 by GSK3-beta. Phosphorylation by GSK3-beta enhances its antiviral activity. As to expression, expressed in the kidney and liver.

The protein localises to the cytoplasm. It is found in the nucleus. Functionally, antiviral protein which inhibits the replication of viruses by recruiting the cellular RNA degradation machineries to degrade the viral mRNAs. Binds to a ZAP-responsive element (ZRE) present in the target viral mRNA, recruits cellular poly(A)-specific ribonuclease PARN to remove the poly(A) tail, and the 3'-5' exoribonuclease complex exosome to degrade the RNA body from the 3'-end. It also recruits the decapping complex DCP1-DCP2 through RNA helicase p72 (DDX17) to remove the cap structure of the viral mRNA to initiate its degradation from the 5'-end. Its target viruses belong to families which include retroviridae: human immunodeficiency virus type 1 (HIV-1) and moloney and murine leukemia virus (MoMLV), filoviridae: ebola virus (EBOV) and marburg virus (MARV), togaviridae: sindbis virus (SINV) and Ross river virus (RRV). Specifically targets the multiply spliced but not unspliced or singly spliced HIV-1 mRNAs for degradation. This is Zinc finger CCCH-type antiviral protein 1 (Zc3hav1) from Rattus norvegicus (Rat).